The chain runs to 651 residues: L-type lectin-domain containing receptor kinase IX.1 (651 aa).

Positions 1–19 (MANSILLFSFVLVLPFVCS) are cleaved as a signal peptide. The tract at residues 20 to 251 (VQFNISRFGS…GNRLLSWEFS (232 aa)) is legume-lectin like. Residues 20–269 (VQFNISRFGS…KKSQNDKKGM (250 aa)) lie on the Extracellular side of the membrane. Residues asparagine 23, asparagine 125, asparagine 129, asparagine 162, asparagine 169, asparagine 174, asparagine 195, and asparagine 211 are each glycosylated (N-linked (GlcNAc...) asparagine). A helical transmembrane segment spans residues 270–290 (IIGISVSGFVLLTFFITSLIV). At 291–651 (FLKRKQQKKK…VTFSSAQHGR (361 aa)) the chain is on the cytoplasmic side. In terms of domain architecture, Protein kinase spans 335–616 (FADDRKLGEG…LNLEAPVPHL (282 aa)). Residues 341–349 (LGEGGFGAV) and lysine 364 each bind ATP. The Proton acceptor role is filled by aspartate 459. Residues 630–651 (SNTTSVSSGGATVTFSSAQHGR) are disordered.

In the C-terminal section; belongs to the protein kinase superfamily. Ser/Thr protein kinase family. This sequence in the N-terminal section; belongs to the leguminous lectin family. In terms of assembly, interacts with ABCG40.

The protein resides in the cell membrane. The enzyme catalyses L-seryl-[protein] + ATP = O-phospho-L-seryl-[protein] + ADP + H(+). It carries out the reaction L-threonyl-[protein] + ATP = O-phospho-L-threonyl-[protein] + ADP + H(+). In terms of biological role, promotes hydrogen peroxide H(2)O(2) production and cell death. Its function is as follows. Involved in resistance response to the pathogenic oomycetes Phytophthora infestans and Phytophthora capsici. This is L-type lectin-domain containing receptor kinase IX.1 from Arabidopsis thaliana (Mouse-ear cress).